Reading from the N-terminus, the 172-residue chain is Small ribosomal subunit protein bS6 (172 aa).

Positions Leu-100–Asp-172 are disordered. Residues Lys-107 to Asp-172 are compositionally biased toward basic and acidic residues.

The protein belongs to the bacterial ribosomal protein bS6 family.

Binds together with bS18 to 16S ribosomal RNA. This is Small ribosomal subunit protein bS6 from Prochlorococcus marinus (strain MIT 9211).